The following is a 176-amino-acid chain: NADH-quinone oxidoreductase subunit I 1 (176 aa).

2 consecutive 4Fe-4S ferredoxin-type domains span residues 45–77 and 87–116; these read IVLTRDPEGGERCVACYLCSAACPVDCISMEAT and RWFRINFSRCIFCGLCAEACPTLAIQMTPD. Residues C57, C60, C63, C67, C96, C99, C102, and C106 each coordinate [4Fe-4S] cluster.

It belongs to the complex I 23 kDa subunit family. As to quaternary structure, NDH-1 is composed of 14 different subunits. Subunits NuoA, H, J, K, L, M, N constitute the membrane sector of the complex. It depends on [4Fe-4S] cluster as a cofactor.

The protein localises to the cell inner membrane. It carries out the reaction a quinone + NADH + 5 H(+)(in) = a quinol + NAD(+) + 4 H(+)(out). Functionally, NDH-1 shuttles electrons from NADH, via FMN and iron-sulfur (Fe-S) centers, to quinones in the respiratory chain. The immediate electron acceptor for the enzyme in this species is believed to be ubiquinone. Couples the redox reaction to proton translocation (for every two electrons transferred, four hydrogen ions are translocated across the cytoplasmic membrane), and thus conserves the redox energy in a proton gradient. This chain is NADH-quinone oxidoreductase subunit I 1, found in Geobacter metallireducens (strain ATCC 53774 / DSM 7210 / GS-15).